The primary structure comprises 355 residues: Guanine nucleotide-binding protein alpha-2 subunit (355 aa).

The interval 1 to 20 (MCFGGRGKDDEAEASRSREL) is disordered. The G-alpha domain occupies 33–355 (KEVKLLLLGA…IQRNLKQLIL (323 aa)). The interval 36 to 49 (KLLLLGAGESGKST) is G1 motif. Residues E44, S45, G46, K47, S48, T49, D151, L176, T182, G204, N270, K271, D273, and A328 each coordinate GTP. S48 serves as a coordination point for Mg(2+). The G2 motif stretch occupies residues 174 to 182 (DLLRSRLRT). T182 is a Mg(2+) binding site. Residues 197–206 (YRMFDVGGQR) form a G3 motif region. A G4 motif region spans residues 266-273 (ILFLNKID). The interval 326 to 331 (TNATDT) is G5 motif.

It belongs to the G-alpha family. G(q) subfamily. In terms of assembly, g proteins are composed of 3 units; alpha, beta and gamma. The alpha chain contains the guanine nucleotide binding site. Requires Mg(2+) as cofactor.

Functionally, guanine nucleotide-binding proteins (G proteins) are involved as modulators or transducers in various transmembrane signaling systems. The protein is Guanine nucleotide-binding protein alpha-2 subunit (gna-2) of Neurospora crassa (strain ATCC 24698 / 74-OR23-1A / CBS 708.71 / DSM 1257 / FGSC 987).